Reading from the N-terminus, the 385-residue chain is GTP cyclohydrolase 1 type 2 homolog (385 aa).

A divalent metal cation contacts are provided by H64, H65, D103, H333, and E337.

Belongs to the GTP cyclohydrolase I type 2/NIF3 family. As to quaternary structure, homohexamer.

The polypeptide is GTP cyclohydrolase 1 type 2 homolog (Mycobacterium leprae (strain TN)).